The following is a 460-amino-acid chain: Lipase member I (460 aa).

An N-terminal signal peptide occupies residues 1–15; it reads MRVYIFLCLMCWVRS. Asparagine 63 carries an N-linked (GlcNAc...) asparagine glycan. Serine 159 functions as the Nucleophile in the catalytic mechanism. The active-site Charge relay system is aspartate 183. A disulfide bridge links cysteine 238 with cysteine 251. The active-site Charge relay system is the histidine 253. 2 disulfide bridges follow: cysteine 275–cysteine 286 and cysteine 289–cysteine 297. N-linked (GlcNAc...) asparagine glycosylation is present at asparagine 396. Cysteine 436 and cysteine 455 form a disulfide bridge.

The protein belongs to the AB hydrolase superfamily. Lipase family. As to quaternary structure, interacts with heparin with a high affinity. In terms of tissue distribution, expressed in testis. Expressed exclusively at the connecting piece of the sperm.

The protein localises to the cell membrane. It is found in the secreted. The enzyme catalyses 1-hexadecanoyl-2-(9Z-octadecenoyl)-sn-glycero-3-phosphate + H2O = 2-(9Z-octadecenoyl)-sn-glycero-3-phosphate + hexadecanoate + H(+). With respect to regulation, inhibited by sodium vanadate. In terms of biological role, hydrolyzes specifically phosphatidic acid (PA) to produce 2-acyl lysophosphatidic acid (LPA; a potent bioactive lipid mediator) and fatty acid. Does not hydrolyze other phospholipids, like phosphatidylserine (PS), phosphatidylcholine (PC) and phosphatidylethanolamine (PE) or triacylglycerol (TG). The protein is Lipase member I (LIPI) of Homo sapiens (Human).